A 201-amino-acid polypeptide reads, in one-letter code: Holliday junction resolvase RecU (201 aa).

Mg(2+)-binding residues include threonine 85, aspartate 87, aspartate 100, and glutamine 119.

Belongs to the RecU family. Mg(2+) serves as cofactor.

The protein resides in the cytoplasm. It carries out the reaction Endonucleolytic cleavage at a junction such as a reciprocal single-stranded crossover between two homologous DNA duplexes (Holliday junction).. Its function is as follows. Endonuclease that resolves Holliday junction intermediates in genetic recombination. Cleaves mobile four-strand junctions by introducing symmetrical nicks in paired strands. Promotes annealing of linear ssDNA with homologous dsDNA. Required for DNA repair, homologous recombination and chromosome segregation. This is Holliday junction resolvase RecU from Pediococcus pentosaceus (strain ATCC 25745 / CCUG 21536 / LMG 10740 / 183-1w).